A 280-amino-acid polypeptide reads, in one-letter code: Ycf3-interacting protein 1, chloroplastic (280 aa).

The N-terminal 62 residues, 1–62, are a transit peptide targeting the chloroplast; that stretch reads MTTQIFQLPL…NNRRFGSLIV (62 aa). A disordered region spans residues 75 to 103; it reads PVPLTLEQQEKEKQNRDDEEDEIDEGDVD. The span at 91-103 shows a compositional bias: acidic residues; the sequence is DDEEDEIDEGDVD. A helical membrane pass occupies residues 255–275; the sequence is ALYFVSALPVIIGISVVLILF.

This sequence belongs to the Y3IP1/CEST family. As to quaternary structure, interacts with Ycf3. Expressed in cotyledons, rosette and cauline leaves, stems and sepals.

The protein localises to the plastid. Its subcellular location is the chloroplast thylakoid membrane. In terms of biological role, nuclear genome-encoded factor that participates in photosystem I (PSI) biogenesis. Cooperates with the plastid genome-encoded protein PSI assembly Ycf3 in the assembly of stable PSI units in the thylakoid membrane. Involved in light-induced chloroplast development and growth. Involved in the plant response to abiotic and photooxidative stresses. May be involved in the suppression of photooxidative damage. The sequence is that of Ycf3-interacting protein 1, chloroplastic from Arabidopsis thaliana (Mouse-ear cress).